A 143-amino-acid chain; its full sequence is Transcriptional regulator MraZ (143 aa).

SpoVT-AbrB domains follow at residues threonine 5 to glutamate 47 and alanine 76 to serine 119.

This sequence belongs to the MraZ family. In terms of assembly, forms oligomers.

It localises to the cytoplasm. Its subcellular location is the nucleoid. This is Transcriptional regulator MraZ from Corynebacterium jeikeium (strain K411).